The sequence spans 1065 residues: Ceruloplasmin (1065 aa).

Residues 1-19 (MKILILGIFLFLCSTPAWA) form the signal peptide. Plastocyanin-like domains follow at residues 20 to 200 (KEKH…LIIC) and 209 to 357 (KEKH…VQEC). The Na(+) site is built by Y55, G64, and Y67. H120 and H122 together coordinate Cu(2+). H120 lines the O2 pocket. Residue K128 participates in Ca(2+) binding. N-linked (GlcNAc...) (complex) asparagine glycosylation occurs at N138. 3 residues coordinate Ca(2+): Q143, D146, and D147. The cysteines at positions 174 and 200 are disulfide-linked. 2 residues coordinate Cu(2+): H180 and H182. Position 180 (H180) interacts with O2. S256 serves as a coordination point for Na(+). A disulfide bridge links C276 with C357. Residues H295, C338, and H343 each coordinate Cu(2+). N-linked (GlcNAc...) (complex) asparagine glycans are attached at residues N358 and N397. 2 Plastocyanin-like domains span residues 370–560 (HVRH…MKIC) and 570–718 (RQKD…VNQC). Positions 408, 417, and 420 each coordinate Na(+). C534 and C560 are disulfide-bonded. N588 carries an N-linked (GlcNAc...) asparagine glycan. A Na(+)-binding site is contributed by S617. C637 and C718 are disulfide-bonded. Cu(2+) contacts are provided by H656, C699, H704, and M709. C699 acts as the Nucleophile; for glutathione peroxidase activity in catalysis. Position 722 is a phosphoserine; by FAM20C (S722). 2 consecutive Plastocyanin-like domains span residues 730 to 900 (GERT…LIVC) and 908 to 1061 (FNPR…QNED). N762 carries an N-linked (GlcNAc...) (complex) asparagine glycan. Residues F767, G776, and Y779 each coordinate Na(+). C874 and C900 are disulfide-bonded. N-linked (GlcNAc...) asparagine glycosylation occurs at N926. S955 is a Na(+) binding site. Cu(2+) contacts are provided by H994, H997, H999, H1039, C1040, H1041, H1045, and M1050. O2 is bound by residues H997 and H999. O2 is bound at residue H1041.

This sequence belongs to the multicopper oxidase family. Found in a complex with MPO and LTF; interacts directly with MPO and LTF, which allows Fe(3+) incorporation into LTF, activation of CP ferroxidase activity and protection of CP antioxidant properties by MPO. Cu(2+) serves as cofactor. As to expression, expressed by the liver and secreted in plasma.

It localises to the secreted. It catalyses the reaction 4 Fe(2+) + O2 + 4 H(+) = 4 Fe(3+) + 2 H2O. It carries out the reaction 4 Cu(+) + O2 + 4 H(+) = 4 Cu(2+) + 2 H2O. The catalysed reaction is a hydroperoxide + 2 glutathione = an alcohol + glutathione disulfide + H2O. The enzyme catalyses 4 nitric oxide + O2 + 2 H2O = 4 nitrite + 4 H(+). It catalyses the reaction 2 glutathione + H2O2 = glutathione disulfide + 2 H2O. Functionally, multifunctional blue, copper-binding (6-7 atoms per molecule) glycoprotein. It has ferroxidase activity oxidizing Fe(2+) to Fe(3+) without releasing radical oxygen species. It is involved in iron transport across the cell membrane. Copper ions provide a large number of enzymatic activites. Oxidizes highly toxic ferrous ions to the ferric state for further incorporation onto apo-transferrins, catalyzes Cu(+) oxidation and promotes the oxidation of biogenic amines such as norepinephrin and serotonin. Provides Cu(2+) ions for the ascorbate-mediated deaminase degradation of the heparan sulfate chains of GPC1. Has glutathione peroxidase-like activity, can remove both hydrogen peroxide and lipid hydroperoxide in the presence of thiols. Also shows NO-oxidase and NO2 synthase activities that determine endocrine NO homeostasis. This chain is Ceruloplasmin, found in Homo sapiens (Human).